The following is a 165-amino-acid chain: Crossover junction endodeoxyribonuclease RuvC (165 aa).

Catalysis depends on residues D7, E67, and D140. D7, E67, and D140 together coordinate Mg(2+).

The protein belongs to the RuvC family. In terms of assembly, homodimer which binds Holliday junction (HJ) DNA. The HJ becomes 2-fold symmetrical on binding to RuvC with unstacked arms; it has a different conformation from HJ DNA in complex with RuvA. In the full resolvosome a probable DNA-RuvA(4)-RuvB(12)-RuvC(2) complex forms which resolves the HJ. Mg(2+) is required as a cofactor.

It is found in the cytoplasm. It catalyses the reaction Endonucleolytic cleavage at a junction such as a reciprocal single-stranded crossover between two homologous DNA duplexes (Holliday junction).. In terms of biological role, the RuvA-RuvB-RuvC complex processes Holliday junction (HJ) DNA during genetic recombination and DNA repair. Endonuclease that resolves HJ intermediates. Cleaves cruciform DNA by making single-stranded nicks across the HJ at symmetrical positions within the homologous arms, yielding a 5'-phosphate and a 3'-hydroxyl group; requires a central core of homology in the junction. The consensus cleavage sequence is 5'-(A/T)TT(C/G)-3'. Cleavage occurs on the 3'-side of the TT dinucleotide at the point of strand exchange. HJ branch migration catalyzed by RuvA-RuvB allows RuvC to scan DNA until it finds its consensus sequence, where it cleaves and resolves the cruciform DNA. This Desulfitobacterium hafniense (strain DSM 10664 / DCB-2) protein is Crossover junction endodeoxyribonuclease RuvC.